Reading from the N-terminus, the 478-residue chain is Geranial dehydrogenase (478 aa).

An NAD(+)-binding site is contributed by 230–235 (GSTSAG). Residue glutamate 252 is the Proton acceptor of the active site. Cysteine 286 functions as the Nucleophile in the catalytic mechanism.

Belongs to the aldehyde dehydrogenase family.

It catalyses the reaction (2E)-geranial + NAD(+) + H2O = geranate + NADH + 2 H(+). The enzyme catalyses perillyl aldehyde + NAD(+) + H2O = perillate + NADH + 2 H(+). It functions in the pathway terpene metabolism; monoterpene degradation. In terms of biological role, involved in the degradation of the monoterpenes beta-myrcene and limonene. During anaerobic degradation of beta-myrcene, catalyzes the NAD(+)-dependent oxidation of geranial to geranic acid. Seems to be specific for the trans-isomer geranial, since it does not act on the cis-isomer neral. During degradation of limonene, catalyzes the NAD(+)-dependent conversion of perillyl aldehyde to perrilic acid. The protein is Geranial dehydrogenase of Castellaniella defragrans (strain DSM 12143 / CCUG 39792 / 65Phen) (Alcaligenes defragrans).